A 353-amino-acid polypeptide reads, in one-letter code: Heat-inducible transcription repressor HrcA (353 aa).

The protein belongs to the HrcA family.

Functionally, negative regulator of class I heat shock genes (grpE-dnaK-dnaJ and groELS operons). Prevents heat-shock induction of these operons. The protein is Heat-inducible transcription repressor HrcA of Synechococcus elongatus (strain ATCC 33912 / PCC 7942 / FACHB-805) (Anacystis nidulans R2).